The sequence spans 134 residues: Small ribosomal subunit protein uS11 (134 aa).

The interval 114–134 is disordered; sequence TPVPHNGTRPPRKWFKRQEKR. The span at 123 to 134 shows a compositional bias: basic residues; that stretch reads PPRKWFKRQEKR.

It belongs to the universal ribosomal protein uS11 family. Part of the 30S ribosomal subunit. Interacts with proteins S7 and S18. Binds to IF-3.

Its function is as follows. Located on the platform of the 30S subunit, it bridges several disparate RNA helices of the 16S rRNA. Forms part of the Shine-Dalgarno cleft in the 70S ribosome. The protein is Small ribosomal subunit protein uS11 of Mesomycoplasma hyopneumoniae (strain J / ATCC 25934 / NCTC 10110) (Mycoplasma hyopneumoniae).